The following is a 337-amino-acid chain: 2-oxoglutarate-dependent dioxygenase 19 (337 aa).

A disordered region spans residues 1–25; sequence MVAPSRLPSHEEQSAAAAADGSATP. In terms of domain architecture, Fe2OG dioxygenase spans 179–283; sequence NLESCFQILV…RMSFVSLIGP (105 aa). Positions 208, 210, and 264 each coordinate Fe cation. 2-oxoglutarate is bound at residue Arg-274.

This sequence belongs to the iron/ascorbate-dependent oxidoreductase family. Fe(2+) serves as cofactor. Requires L-ascorbate as cofactor. Expressed in shoots.

The protein resides in the cytoplasm. The enzyme catalyses melatonin + 2-oxoglutarate + O2 = 2-hydroxymelatonin + succinate + CO2. In terms of biological role, involved in melatonin degradation. Catalyzes the hydroxylation of melatonin to produce 2-hydroxymelatonin. This is 2-oxoglutarate-dependent dioxygenase 19 from Oryza sativa subsp. japonica (Rice).